Here is a 595-residue protein sequence, read N- to C-terminus: Isoprene synthase, chloroplastic (595 aa).

A chloroplast-targeting transit peptide spans 1-37; the sequence is MATELLCLHRPISLTHKLFRNPLPKVIQATPLTLKLR. Residue aspartate 345 participates in dimethylallyl diphosphate binding. Mg(2+)-binding residues include aspartate 345 and aspartate 349. The DDXXD motif motif lies at 345 to 349; it reads DDIYD. 3 residues coordinate dimethylallyl diphosphate: glutamate 423, arginine 486, and asparagine 489. Residues asparagine 489, serine 493, and glutamate 497 each coordinate Mg(2+).

The protein belongs to the terpene synthase family. Tpsb subfamily. Requires Mg(2+) as cofactor. Mn(2+) is required as a cofactor.

The protein resides in the plastid. It localises to the chloroplast. It catalyses the reaction dimethylallyl diphosphate = isoprene + diphosphate. Its function is as follows. Lyase that catalyzes the formation of isoprene from dimethylallyl diphosphate. The sequence is that of Isoprene synthase, chloroplastic (ISPS) from Populus tremuloides (Quaking aspen).